The chain runs to 564 residues: Probable diguanylate cyclase DgcQ (564 aa).

Helical transmembrane passes span 20 to 40 (LGPG…STLL) and 360 to 380 (IALT…WYVI). Residues 428 to 563 (HPFSVIQVDL…GRNRVFASDN (136 aa)) form the GGDEF domain. D436 is a binding site for Mg(2+). Residues N444, H449, and D453 each coordinate substrate. Mg(2+) is bound at residue E479. E479 serves as the catalytic Proton acceptor.

In terms of assembly, homodimer. Requires Mg(2+) as cofactor.

Its subcellular location is the cell inner membrane. The catalysed reaction is 2 GTP = 3',3'-c-di-GMP + 2 diphosphate. Its pathway is glycan metabolism; bacterial cellulose biosynthesis. It participates in purine metabolism; 3',5'-cyclic di-GMP biosynthesis. Its function is as follows. Catalyzes the synthesis of cyclic-di-GMP (c-di-GMP) via the condensation of 2 GTP molecules. Cyclic-di-GMP is a second messenger which controls cell surface-associated traits in bacteria. Involved in the regulation of cellulose production. In Escherichia coli (strain K12), this protein is Probable diguanylate cyclase DgcQ.